The sequence spans 109 residues: MFNRPNRNDVDDGVQDIQNDVNQLADSLESVLKSWGSDAKGEAEAARSKAQALLKETRARMHGRTRVQQAARDAVGCADSFVRERPWCSVGTAAAVGIFIGALLSMRKS.

A helical membrane pass occupies residues 87-106 (WCSVGTAAAVGIFIGALLSM).

It belongs to the ElaB/YgaM/YqjD family. May bind to ribosomes.

It localises to the cell inner membrane. This is an uncharacterized protein from Escherichia coli O157:H7.